We begin with the raw amino-acid sequence, 1502 residues long: Clustered mitochondria protein homolog (1502 aa).

6 disordered regions span residues 1-62 (MSES…EPLD), 571-615 (AQAE…NPMM), 755-799 (AEAE…EEDR), 1054-1085 (KDQE…GETV), 1381-1403 (ARER…RLGG), and 1429-1502 (GQGG…GAKR). Residues 7–35 (AAAQNGQAEEQQLQQQLDEQQQLEEQQQL) are compositionally biased toward low complexity. Residues 53-62 (KPKDSTEPLD) show a composition bias toward basic and acidic residues. A Clu domain is found at 399–693 (EILRTQLAFL…RLAPVDVEWL (295 aa)). The span at 575–586 (TEAEAETADAVE) shows a compositional bias: acidic residues. The span at 587-606 (GEQKKEDWVDVEKPTEKSGS) shows a compositional bias: basic and acidic residues. Residues 781-792 (EEQSAAASAAAA) are compositionally biased toward low complexity. Residues 1054–1069 (KDQEEEENKREENIKS) are compositionally biased toward basic and acidic residues. The span at 1429 to 1451 (GQGGNPSANAAAATAGQGEQANG) shows a compositional bias: low complexity. Residues 1462 to 1471 (RGTESLEELV) are compositionally biased toward basic and acidic residues. Basic residues predominate over residues 1486–1502 (KRGKNALRGKRRTGAKR).

This sequence belongs to the CLU family. In terms of assembly, may associate with the eukaryotic translation initiation factor 3 (eIF-3) complex.

The protein localises to the cytoplasm. MRNA-binding protein involved in proper cytoplasmic distribution of mitochondria. This Cryptococcus neoformans var. neoformans serotype D (strain B-3501A) (Filobasidiella neoformans) protein is Clustered mitochondria protein homolog.